Reading from the N-terminus, the 967-residue chain is Siderophore exporter MmpL4 (967 aa).

Helical transmembrane passes span 26 to 46, 210 to 230, 242 to 262, 303 to 323, 333 to 353, 384 to 404, 769 to 789, 793 to 813, 821 to 841, 875 to 895, and 913 to 934; these read AFAVPIILGWLAVCVVVTVFV, VIFIMLLLVYRSIITVVLLLI, VVAVLGHSGAIGLTTFAVSLL, AHVILGSGLTIAGATFCLSFA, IPCAVGMLVAVAVALTLGPAV, WPLPVLVATCAIALVGLLALP, WDLLIAAISSLCLIFIIMLII, FIAAAVIVGTVALSLGASFGL, ILAIHLHWLVLAMSVIVLLAV, VVTNAGLVFAVTMASMAVSDL, and TLIVRSFMTPSIAALLGRWFWW. Residues 943-967 are disordered; the sequence is ARTPTVPSETQPAGRPLAMSSDRLG.

Belongs to the resistance-nodulation-cell division (RND) (TC 2.A.6) family. MmpL subfamily. As to quaternary structure, interacts with MmpS4.

Its subcellular location is the cell inner membrane. In terms of biological role, part of an export system, which is required for biosynthesis and secretion of siderophores. This chain is Siderophore exporter MmpL4 (mmpL4), found in Mycobacterium tuberculosis (strain CDC 1551 / Oshkosh).